Here is a 310-residue protein sequence, read N- to C-terminus: N-acetyl-gamma-glutamyl-phosphate reductase (310 aa).

Cysteine 117 is an active-site residue.

The protein belongs to the NAGSA dehydrogenase family. Type 2 subfamily.

It is found in the cytoplasm. The enzyme catalyses N-acetyl-L-glutamate 5-semialdehyde + phosphate + NADP(+) = N-acetyl-L-glutamyl 5-phosphate + NADPH + H(+). It functions in the pathway amino-acid biosynthesis; L-arginine biosynthesis; N(2)-acetyl-L-ornithine from L-glutamate: step 3/4. In terms of biological role, catalyzes the NADPH-dependent reduction of N-acetyl-5-glutamyl phosphate to yield N-acetyl-L-glutamate 5-semialdehyde. This is N-acetyl-gamma-glutamyl-phosphate reductase from Brucella abortus (strain S19).